A 155-amino-acid polypeptide reads, in one-letter code: Acyl-CoA-binding domain-containing protein 3 (155 aa).

The ACB domain occupies 3-88 (LQEDFEEYAE…VKQLQEEAAA (86 aa)). Residues Lys15, 30–34 (YGLYK), Lys56, and Tyr75 contribute to the an acyl-CoA site.

It belongs to the ACBP family. In terms of tissue distribution, highly expressed in leaves. Expressed at low levels in roots and seeds.

It localises to the cytoplasm. Its subcellular location is the cytosol. Binds medium- and long-chain acyl-CoA esters with high affinity. Can interact in vitro with linolenoyl-CoA. Binds phosphatidic acid (PA) and phosphatidylcholine (PC) in vitro. May play a role in the biosynthesis of phospholipids. The chain is Acyl-CoA-binding domain-containing protein 3 from Oryza sativa subsp. japonica (Rice).